The sequence spans 411 residues: MHKVLTELRDREILKDISNEEKFLSLPKNSGVYVGFDPTADSLHLGNYVQIVNLIRFKKHNWNALAVLGGATGMIGDPSFRSTERVLLSTEELLKNKNKIKSQLESFGLKVFDNYEIYKDISFLDFLKNIGKLINVSYMLAKDSVKDRLAQGLSFTEFSYQIIQGYDFLHLYQNQDIFVQYGGSDQWGNITTGIEMISKVVGDNHKAIAITANLLTDSNGNKFGKSTGGGNLWLDAQKTKPFDMYQFLINQPDSEVEKLLKWLTFLEISEIKDLVNKHNKNPKDRLAQKALAYEVIKDIHGKSAAENCTFLSEMLFNLSLDLSKVTLENMEFAYNQIESFEVEKGVNLVNFLVENKILQSKRLAREFIASKSLKFNYEPIDEDFSVSSNYFEGKYATLHLGKKKILICKVK.

Tyr33 provides a ligand contact to L-tyrosine. A 'HIGH' region motif is present at residues 38-47 (PTADSLHLGN). Residues Tyr160 and Gln164 each coordinate L-tyrosine. The 'KMSKS' region signature appears at 222 to 226 (KFGKS). Lys225 contributes to the ATP binding site. The S4 RNA-binding domain maps to 346 to 410 (VNLVNFLVEN…GKKKILICKV (65 aa)).

The protein belongs to the class-I aminoacyl-tRNA synthetase family. TyrS type 1 subfamily. In terms of assembly, homodimer.

The protein resides in the cytoplasm. It carries out the reaction tRNA(Tyr) + L-tyrosine + ATP = L-tyrosyl-tRNA(Tyr) + AMP + diphosphate + H(+). In terms of biological role, catalyzes the attachment of tyrosine to tRNA(Tyr) in a two-step reaction: tyrosine is first activated by ATP to form Tyr-AMP and then transferred to the acceptor end of tRNA(Tyr). In Mycoplasmopsis synoviae (strain 53) (Mycoplasma synoviae), this protein is Tyrosine--tRNA ligase.